Reading from the N-terminus, the 140-residue chain is Sex-regulated protein janus-B (140 aa).

Arginine 42 serves as a coordination point for substrate. The Proton acceptor role is filled by histidine 69. 110–112 (SRT) provides a ligand contact to substrate.

Belongs to the janus family.

Functionally, janA and janB regulate somatic sex differentiation. The protein is Sex-regulated protein janus-B (janB) of Drosophila teissieri (Fruit fly).